We begin with the raw amino-acid sequence, 393 residues long: tRNA(Met) cytidine acetate ligase (393 aa).

3 residues coordinate ATP: Gly-81, Asn-142, and Arg-167.

Belongs to the TmcAL family.

Its subcellular location is the cytoplasm. It carries out the reaction cytidine(34) in elongator tRNA(Met) + acetate + ATP = N(4)-acetylcytidine(34) in elongator tRNA(Met) + AMP + diphosphate. In terms of biological role, catalyzes the formation of N(4)-acetylcytidine (ac(4)C) at the wobble position of elongator tRNA(Met), using acetate and ATP as substrates. First activates an acetate ion to form acetyladenylate (Ac-AMP) and then transfers the acetyl group to tRNA to form ac(4)C34. This is tRNA(Met) cytidine acetate ligase from Bacillus cereus (strain ATCC 14579 / DSM 31 / CCUG 7414 / JCM 2152 / NBRC 15305 / NCIMB 9373 / NCTC 2599 / NRRL B-3711).